Here is a 1969-residue protein sequence, read N- to C-terminus: Hybrid signal transduction histidine kinase B (1969 aa).

Polar residues predominate over residues 1 to 10 (MEKSEQTNSF). 5 disordered regions span residues 1 to 91 (MEKS…HETK), 218 to 335 (KINE…KTKQ), 412 to 436 (QQQQQHHRHYHHHINSGGSSGSSDK), 468 to 505 (NNINIQAPSTPVQSRNYPLFTTQSPKNANSASKSKNKL), and 551 to 598 (GSGG…YNNN). A compositionally biased stretch (low complexity) spans 11-55 (ESSNNNNNNIDSNINNNLENNNNKNNNNNNNNNNNNNNNNNNIEN). Basic and acidic residues predominate over residues 56 to 65 (SIDKNNKEDN). A compositionally biased stretch (basic residues) spans 72-86 (SHRKHRTRLKSKKGN). A compositionally biased stretch (polar residues) spans 242-252 (TNSSILKSSEQ). A compositionally biased stretch (low complexity) spans 280–292 (SSSSDEGSDNSKS). A compositionally biased stretch (polar residues) spans 293-304 (QHSSVNTPTLSR). The segment covering 313–335 (SQQSQKQSQQQSQQPQQQNKTKQ) has biased composition (low complexity). Residues 416–425 (QHHRHYHHHI) show a composition bias toward basic residues. Over residues 469-492 (NINIQAPSTPVQSRNYPLFTTQSP) the composition is skewed to polar residues. The segment covering 551–571 (GSGGGGSGGGGGGGGGGGGIG) has biased composition (gly residues). The span at 574-598 (SSFLDDNNNLNNGENFKNSNSYNNN) shows a compositional bias: low complexity. Transmembrane regions (helical) follow at residues 660 to 680 (AYILNFLNLVLFVVYLLSTIL), 684 to 704 (EWFIFAPGILLSVIYFFLGKI), 708 to 728 (MYLIAFLTISTAVAINITSII), 747 to 767 (LVMIMVPLLFPSIVYSIVILI), and 795 to 815 (FGELLRSIIIVFVILMFYTIL). In terms of domain architecture, Histidine kinase spans 967-1188 (TVSHELRTPI…TFSFTIPCGI (222 aa)). His970 is subject to Phosphohistidine; by autocatalysis. Disordered regions lie at residues 1359-1415 (ASKD…HQLI), 1521-1563 (GIAL…TTQS), 1617-1709 (NNNF…SSHS), and 1755-1832 (QKPQ…TAAA). A compositionally biased stretch (gly residues) spans 1373–1398 (GDGGRSLSGGGGGVGSNGNGNGGGGL). Composition is skewed to low complexity over residues 1399-1410 (DSNISPSELSSS) and 1527-1549 (SSSKSPSIPSSSSASASALSPNS). Polar residues-rich tracts occupy residues 1554–1563 (ELGNGKTTQS) and 1626–1665 (KPSTPTFLSNQPSPATSNSPQLLQSPTTSTTGSINLSPHR). 2 stretches are compositionally biased toward low complexity: residues 1755–1774 (QKPQQQQQKPTTTTTTTSTQ) and 1781–1821 (KTTT…TTTT). The Response regulatory domain maps to 1840–1967 (KILLVEDNFV…DILIQMIKKH (128 aa)). Asp1889 carries the post-translational modification 4-aspartylphosphate.

Its subcellular location is the membrane. It carries out the reaction ATP + protein L-histidine = ADP + protein N-phospho-L-histidine.. Acts in the cytokinin signal transduction pathway that regulates spore germination. Required for the maintenance of spore dormancy. Does not appear to act as a cytokinin receptor. Probably undergoes ATP-dependent autophosphorylation at a conserved histidine residue in the kinase core, which is followed by transfer of the phosphoryl group to a conserved aspartate residue in the receiver domain. This is Hybrid signal transduction histidine kinase B (dhkB) from Dictyostelium discoideum (Social amoeba).